A 370-amino-acid chain; its full sequence is Quinolinate synthase (370 aa).

Residues His62 and Ser83 each contribute to the iminosuccinate site. Cys128 contacts [4Fe-4S] cluster. Iminosuccinate is bound by residues Tyr154 to Asn156 and Ser171. Residue Cys215 participates in [4Fe-4S] cluster binding. Iminosuccinate is bound by residues His241–Glu243 and Thr258. Cys312 lines the [4Fe-4S] cluster pocket.

It belongs to the quinolinate synthase family. Type 1 subfamily. [4Fe-4S] cluster is required as a cofactor.

The protein localises to the cytoplasm. The catalysed reaction is iminosuccinate + dihydroxyacetone phosphate = quinolinate + phosphate + 2 H2O + H(+). The protein operates within cofactor biosynthesis; NAD(+) biosynthesis; quinolinate from iminoaspartate: step 1/1. Catalyzes the condensation of iminoaspartate with dihydroxyacetone phosphate to form quinolinate. In Neisseria gonorrhoeae (strain ATCC 700825 / FA 1090), this protein is Quinolinate synthase.